A 764-amino-acid polypeptide reads, in one-letter code: Phosphoribosylformylglycinamidine synthase subunit PurL (764 aa).

Positions 1 to 23 are disordered; it reads MTQEVDTVERAAATPDHPQPYRE. Residue H57 is part of the active site. Residues Y60 and K104 each contribute to the ATP site. E106 provides a ligand contact to Mg(2+). Residues 107 to 110 and R129 each bind substrate; that span reads SHNH. The active-site Proton acceptor is the H108. D130 contacts Mg(2+). Q258 lines the substrate pocket. Residue D286 participates in Mg(2+) binding. Residue 330–332 participates in substrate binding; sequence ESQ. 2 residues coordinate ATP: N518 and G555. N556 lines the Mg(2+) pocket. A substrate-binding site is contributed by S558.

It belongs to the FGAMS family. In terms of assembly, monomer. Part of the FGAM synthase complex composed of 1 PurL, 1 PurQ and 2 PurS subunits.

The protein resides in the cytoplasm. It carries out the reaction N(2)-formyl-N(1)-(5-phospho-beta-D-ribosyl)glycinamide + L-glutamine + ATP + H2O = 2-formamido-N(1)-(5-O-phospho-beta-D-ribosyl)acetamidine + L-glutamate + ADP + phosphate + H(+). It participates in purine metabolism; IMP biosynthesis via de novo pathway; 5-amino-1-(5-phospho-D-ribosyl)imidazole from N(2)-formyl-N(1)-(5-phospho-D-ribosyl)glycinamide: step 1/2. Functionally, part of the phosphoribosylformylglycinamidine synthase complex involved in the purines biosynthetic pathway. Catalyzes the ATP-dependent conversion of formylglycinamide ribonucleotide (FGAR) and glutamine to yield formylglycinamidine ribonucleotide (FGAM) and glutamate. The FGAM synthase complex is composed of three subunits. PurQ produces an ammonia molecule by converting glutamine to glutamate. PurL transfers the ammonia molecule to FGAR to form FGAM in an ATP-dependent manner. PurS interacts with PurQ and PurL and is thought to assist in the transfer of the ammonia molecule from PurQ to PurL. The sequence is that of Phosphoribosylformylglycinamidine synthase subunit PurL from Mycolicibacterium vanbaalenii (strain DSM 7251 / JCM 13017 / BCRC 16820 / KCTC 9966 / NRRL B-24157 / PYR-1) (Mycobacterium vanbaalenii).